A 529-amino-acid polypeptide reads, in one-letter code: Probable alpha-galactosidase A (529 aa).

Positions 1-19 are cleaved as a signal peptide; the sequence is MKALFAAITMAHALLQTQA. A disulfide bond links Cys42 and Cys74. N-linked (GlcNAc...) asparagine glycosylation is found at Asn45, Asn83, Asn89, and Asn119. Cys122 and Cys152 are oxidised to a cystine. Asp150 acts as the Nucleophile in catalysis. Asn199 is a glycosylation site (N-linked (GlcNAc...) asparagine). The Proton donor role is filled by Asp208. An N-linked (GlcNAc...) asparagine glycan is attached at Asn351. A Ricin B-type lectin domain is found at 408 to 528; the sequence is RVDAVSTGIV…GLPSGVRVSG (121 aa). Intrachain disulfides connect Cys425/Cys438 and Cys462/Cys475.

It belongs to the glycosyl hydrolase 27 family.

The protein resides in the secreted. The enzyme catalyses Hydrolysis of terminal, non-reducing alpha-D-galactose residues in alpha-D-galactosides, including galactose oligosaccharides, galactomannans and galactolipids.. Its function is as follows. Hydrolyzes a variety of simple alpha-D-galactoside as well as more complex molecules such as oligosaccharides and polysaccharides. In Aspergillus terreus (strain NIH 2624 / FGSC A1156), this protein is Probable alpha-galactosidase A (aglA).